A 634-amino-acid polypeptide reads, in one-letter code: Threonine--tRNA ligase (634 aa).

One can recognise a TGS domain in the interval 1 to 61 (MINIRFPDGS…NSNCELRLIT (61 aa)). Positions 241-532 (DHRKIGKVLD…LIEHYAGNLP (292 aa)) are catalytic. Positions 332, 383, and 509 each coordinate Zn(2+).

This sequence belongs to the class-II aminoacyl-tRNA synthetase family. As to quaternary structure, homodimer. Zn(2+) is required as a cofactor.

It is found in the cytoplasm. The catalysed reaction is tRNA(Thr) + L-threonine + ATP = L-threonyl-tRNA(Thr) + AMP + diphosphate + H(+). In terms of biological role, catalyzes the attachment of threonine to tRNA(Thr) in a two-step reaction: L-threonine is first activated by ATP to form Thr-AMP and then transferred to the acceptor end of tRNA(Thr). Also edits incorrectly charged L-seryl-tRNA(Thr). The protein is Threonine--tRNA ligase of Francisella tularensis subsp. tularensis (strain FSC 198).